The sequence spans 462 residues: Argininosuccinate lyase (462 aa).

The protein belongs to the lyase 1 family. Argininosuccinate lyase subfamily.

Its subcellular location is the cytoplasm. It catalyses the reaction 2-(N(omega)-L-arginino)succinate = fumarate + L-arginine. Its pathway is amino-acid biosynthesis; L-arginine biosynthesis; L-arginine from L-ornithine and carbamoyl phosphate: step 3/3. This chain is Argininosuccinate lyase, found in Bacillus cytotoxicus (strain DSM 22905 / CIP 110041 / 391-98 / NVH 391-98).